A 485-amino-acid polypeptide reads, in one-letter code: uncharacterized protein (485 aa).

At 1 to 30 (MFSWANIGSNEYLPLKNDRKAYLNQWAKRS) the chain is on the cytoplasmic side. Residues 31-51 (GLAIAAICILGILILAIVKLF) form a helical membrane-spanning segment. Over 52–485 (CFKAIIFPIV…DIEQAYSKLI (434 aa)) the chain is Extracellular. N67 is a glycosylation site (N-linked (GlcNAc...) asparagine). The segment at 74–404 (STVIVISLDG…YEPLGVHGYD (331 aa)) is phosphodiesterase. Catalysis depends on T118, which acts as the Nucleophile. N-linked (GlcNAc...) asparagine glycans are attached at residues N306, N338, N453, and N467.

Belongs to the nucleotide pyrophosphatase/phosphodiesterase family.

Its subcellular location is the membrane. This is an uncharacterized protein from Schizosaccharomyces pombe (strain 972 / ATCC 24843) (Fission yeast).